We begin with the raw amino-acid sequence, 152 residues long: SsrA-binding protein (152 aa).

This sequence belongs to the SmpB family.

It is found in the cytoplasm. Required for rescue of stalled ribosomes mediated by trans-translation. Binds to transfer-messenger RNA (tmRNA), required for stable association of tmRNA with ribosomes. tmRNA and SmpB together mimic tRNA shape, replacing the anticodon stem-loop with SmpB. tmRNA is encoded by the ssrA gene; the 2 termini fold to resemble tRNA(Ala) and it encodes a 'tag peptide', a short internal open reading frame. During trans-translation Ala-aminoacylated tmRNA acts like a tRNA, entering the A-site of stalled ribosomes, displacing the stalled mRNA. The ribosome then switches to translate the ORF on the tmRNA; the nascent peptide is terminated with the 'tag peptide' encoded by the tmRNA and targeted for degradation. The ribosome is freed to recommence translation, which seems to be the essential function of trans-translation. This is SsrA-binding protein from Rickettsia conorii (strain ATCC VR-613 / Malish 7).